Reading from the N-terminus, the 121-residue chain is Phosphoribosyl-ATP pyrophosphatase (121 aa).

Belongs to the PRA-PH family.

The protein resides in the cytoplasm. It carries out the reaction 1-(5-phospho-beta-D-ribosyl)-ATP + H2O = 1-(5-phospho-beta-D-ribosyl)-5'-AMP + diphosphate + H(+). It participates in amino-acid biosynthesis; L-histidine biosynthesis; L-histidine from 5-phospho-alpha-D-ribose 1-diphosphate: step 2/9. The sequence is that of Phosphoribosyl-ATP pyrophosphatase from Burkholderia cenocepacia (strain HI2424).